The chain runs to 585 residues: Poly(A) RNA polymerase, mitochondrial (585 aa).

The transit peptide at 1–37 directs the protein to the mitochondrion; sequence MAARGVGLLTRLPVCSQRRNRIPRSISRLLSCPGTIA. N6-acetyllysine is present on Lys-90. ATP contacts are provided by residues 107–109 and 244–245; these read YES and GC. 2 residues coordinate Mg(2+): Asp-246 and Asp-248. Residues 441 to 486 form the PAP-associated domain; that stretch reads ELLIKEFFEYFGNFAFNKNSINIRQGREQNKPDSSPLYIQNPFETS. Positions 537 to 585 are disordered; it reads PGSGHTSLSRKKKKKPMSEKVKGLLASIKSNSPDSSTDTSGKRTISTQA. The span at 564–585 shows a compositional bias: polar residues; the sequence is IKSNSPDSSTDTSGKRTISTQA.

This sequence belongs to the DNA polymerase type-B-like family. As to quaternary structure, homodimer. It depends on Mg(2+) as a cofactor. The cofactor is Mn(2+).

The protein resides in the cytoplasm. Its subcellular location is the mitochondrion. It catalyses the reaction RNA(n) + ATP = RNA(n)-3'-adenine ribonucleotide + diphosphate. Its function is as follows. Polymerase that creates the 3' poly(A) tail of mitochondrial transcripts. Can use all four nucleotides, but has higher activity with ATP and UTP (in vitro). Plays a role in replication-dependent histone mRNA degradation. May be involved in the terminal uridylation of mature histone mRNAs before their degradation is initiated. Might be responsible for the creation of some UAA stop codons which are not encoded in mtDNA. In Mus musculus (Mouse), this protein is Poly(A) RNA polymerase, mitochondrial (Mtpap).